The chain runs to 485 residues: Glutamate--tRNA ligase (485 aa).

Positions 12-22 (PSPTGEPHVGT) match the 'HIGH' region motif. The 'KMSKS' region signature appears at 253–257 (KLSKR). Position 256 (Lys-256) interacts with ATP.

It belongs to the class-I aminoacyl-tRNA synthetase family. Glutamate--tRNA ligase type 1 subfamily. In terms of assembly, monomer.

Its subcellular location is the cytoplasm. The catalysed reaction is tRNA(Glu) + L-glutamate + ATP = L-glutamyl-tRNA(Glu) + AMP + diphosphate. Functionally, catalyzes the attachment of glutamate to tRNA(Glu) in a two-step reaction: glutamate is first activated by ATP to form Glu-AMP and then transferred to the acceptor end of tRNA(Glu). This is Glutamate--tRNA ligase from Sinorhizobium medicae (strain WSM419) (Ensifer medicae).